We begin with the raw amino-acid sequence, 514 residues long: Maturase K (514 aa).

Belongs to the intron maturase 2 family. MatK subfamily.

It is found in the plastid. Its subcellular location is the chloroplast. Functionally, usually encoded in the trnK tRNA gene intron. Probably assists in splicing its own and other chloroplast group II introns. In Phoenix dactylifera (Date palm), this protein is Maturase K.